The sequence spans 76 residues: Lividin-2 (76 aa).

The first 22 residues, methionine 1–cysteine 22, serve as a signal peptide directing secretion. A propeptide spanning residues glutamine 23–valine 41 is cleaved from the precursor. Cysteine 70 and cysteine 76 are disulfide-bonded.

Expressed by the skin glands.

It is found in the secreted. In terms of biological role, antimicrobial peptide. This chain is Lividin-2, found in Odorrana livida (Green mountain frog).